We begin with the raw amino-acid sequence, 155 residues long: Molybdopterin synthase catalytic subunit 2 (155 aa).

Residues 101-102 (HR), lysine 117, and 124-126 (KKE) each bind substrate.

It belongs to the MoaE family. MOCS2B subfamily. In terms of assembly, heterotetramer; composed of 2 small (MOCS2A) and 2 large (MOCS2B) subunits.

It is found in the cytoplasm. It carries out the reaction 2 [molybdopterin-synthase sulfur-carrier protein]-C-terminal-Gly-aminoethanethioate + cyclic pyranopterin phosphate + H2O = molybdopterin + 2 [molybdopterin-synthase sulfur-carrier protein]-C-terminal Gly-Gly + 2 H(+). It functions in the pathway cofactor biosynthesis; molybdopterin biosynthesis. Catalytic subunit of the molybdopterin synthase complex, a complex that catalyzes the conversion of precursor Z into molybdopterin. Acts by mediating the incorporation of 2 sulfur atoms from thiocarboxylated MOCS2A into precursor Z to generate a dithiolene group. The sequence is that of Molybdopterin synthase catalytic subunit 2 from Aedes aegypti (Yellowfever mosquito).